Here is an 837-residue protein sequence, read N- to C-terminus: Tuftelin-interacting protein 11 (837 aa).

The span at 1-13 (MSLSHLYRDGEGH) shows a compositional bias: basic and acidic residues. Disordered regions lie at residues 1-31 (MSLSHLYRDGEGHMDDDEDERENFEITDWDL), 54-73 (WAERDSDEERPSFGGKRARD), and 85-136 (LKKG…AGGT). The segment at 1–50 (MSLSHLYRDGEGHMDDDEDERENFEITDWDLQNEFNPNRQRHWQTKEEAT) is required for interaction with DHX15. The residue at position 2 (serine 2) is a Phosphoserine. Over residues 14 to 28 (MDDDEDERENFEITD) the composition is skewed to acidic residues. The span at 54–64 (WAERDSDEERP) shows a compositional bias: basic and acidic residues. A phosphoserine mark is found at serine 59 and serine 98. Residues 91 to 102 (EEAELEDSDDEE) show a composition bias toward acidic residues. A compositionally biased stretch (basic and acidic residues) spans 103–116 (KPVKQDEFPKDFGP). The residue at position 144 (serine 144) is a Phosphoserine. The G-patch domain occupies 149–195 (TKGIGQKLLQKMGYVPGRGLGKNAQGIINPIEAKQRKGKGAVGAYGS). 2 disordered regions span residues 183 to 236 (QRKG…KKKP) and 287 to 313 (HKHSVPDDGLPPQAQPPPPPGKEARAP). Position 210 is a phosphoserine (serine 210). Over residues 217–231 (EFQKELSQWRKDPSG) the composition is skewed to basic and acidic residues. Positions 700 to 705 (VKDKFN) match the Nuclear localization signal motif. The tract at residues 710–734 (IMNRAVSSNVGAYMQPGAREHIAYL) is required for nuclear speckle localization.

This sequence belongs to the TFP11/STIP family. In terms of assembly, identified in the spliceosome C complex. Found in the Intron Large (IL) complex, a post-mRNA release spliceosomal complex containing the excised intron, U2, U5 and U6 snRNPs, and splicing factors. Interacts with TUFT1. Interacts with DHX15; indicative for a recruitment of DHX15 to the IL complex. Interacts with GCFC2.

Its subcellular location is the cytoplasm. The protein resides in the nucleus. Its function is as follows. Involved in pre-mRNA splicing, specifically in spliceosome disassembly during late-stage splicing events. Intron turnover seems to proceed through reactions in two lariat-intron associated complexes termed Intron Large (IL) and Intron Small (IS). In cooperation with DHX15 seems to mediate the transition of the U2, U5 and U6 snRNP-containing IL complex to the snRNP-free IS complex leading to efficient debranching and turnover of excised introns. May play a role in the differentiation of ameloblasts and odontoblasts or in the forming of the enamel extracellular matrix. The protein is Tuftelin-interacting protein 11 (TFIP11) of Bos taurus (Bovine).